The sequence spans 340 residues: Branched-chain-amino-acid aminotransferase (340 aa).

Lysine 187 bears the N6-(pyridoxal phosphate)lysine mark.

This sequence belongs to the class-IV pyridoxal-phosphate-dependent aminotransferase family. Requires pyridoxal 5'-phosphate as cofactor.

The enzyme catalyses L-leucine + 2-oxoglutarate = 4-methyl-2-oxopentanoate + L-glutamate. It carries out the reaction L-isoleucine + 2-oxoglutarate = (S)-3-methyl-2-oxopentanoate + L-glutamate. The catalysed reaction is L-valine + 2-oxoglutarate = 3-methyl-2-oxobutanoate + L-glutamate. The protein operates within amino-acid biosynthesis; L-isoleucine biosynthesis; L-isoleucine from 2-oxobutanoate: step 4/4. Its pathway is amino-acid biosynthesis; L-leucine biosynthesis; L-leucine from 3-methyl-2-oxobutanoate: step 4/4. It functions in the pathway amino-acid biosynthesis; L-valine biosynthesis; L-valine from pyruvate: step 4/4. Acts on leucine, isoleucine and valine. In Helicobacter pylori (strain J99 / ATCC 700824) (Campylobacter pylori J99), this protein is Branched-chain-amino-acid aminotransferase (ilvE).